Here is a 539-residue protein sequence, read N- to C-terminus: Tripartite motif-containing protein 26 (539 aa).

The RING-type zinc finger occupies 16–57 (CSICLDYLRDPVTIDCGHVFCRSCTTDVRPISGSRPVCPLCK). The segment at 97-138 (QDAKLCERHREKLHYYCEDDGKLLCVMCRESREHRPHTAVLM) adopts a B box-type zinc-finger fold. Zn(2+) is bound by residues C102, H105, C124, and H130. A coiled-coil region spans residues 188–227 (IVAEFEQGHQFLREREEHLLEQLAKLEQELTEGREKFKSR). The 245-residue stretch at 295-539 (RGLREFQGKL…WPGTRLLLRP (245 aa)) folds into the B30.2/SPRY domain. Residues 376 to 437 (REGWSEDEEE…EEEEEVLESC (62 aa)) form a disordered region. Residues 380-434 (SEDEEEGDEEEEGEEEEEEEEAGYGDGYDDWETDEDEESLGDEEEEEEEEEEEVL) are compositionally biased toward acidic residues.

It belongs to the TRIM/RBCC family. Interacts with TBK1; this interaction bridges together TBK1 and NEMO in order to activate TBK1. Interacts with INCA1. Autoubiquitinates upon viral infection. In turn, autoubiquitinated TRIM26 recruits NEMO and bridges TBK1-NEMO interaction.

Its subcellular location is the cytoplasm. The protein localises to the nucleus. The catalysed reaction is S-ubiquitinyl-[E2 ubiquitin-conjugating enzyme]-L-cysteine + [acceptor protein]-L-lysine = [E2 ubiquitin-conjugating enzyme]-L-cysteine + N(6)-ubiquitinyl-[acceptor protein]-L-lysine.. In terms of biological role, E3 ubiquitin-protein ligase which regulates the IFN-beta production and antiviral response downstream of various DNA-encoded pattern-recognition receptors (PRRs). Also plays a central role in determining the response to different forms of oxidative stress by controlling levels of DNA glycosylases NEIL1, NEIL3 and NTH1 that are involved in repair of damaged DNA. Promotes nuclear IRF3 ubiquitination and proteasomal degradation. Bridges together TBK1 and NEMO during the innate response to viral infection leading to the activation of TBK1. Positively regulates LPS-mediated inflammatory innate immune response by catalyzing the 'Lys-11'-linked polyubiquitination of TAB1 to enhance its activation and subsequent NF-kappa-B and MAPK signaling. In a manner independent of its catalytic activity, inhibits WWP2, a SOX2-directed E3 ubiquitin ligase, and thus protects SOX2 from polyubiquitination and proteasomal degradation. Ubiquitinates the histone acetyltransferase protein complex component PHF20 and thereby triggers its degradation in the nucleus after its recruitment by the histone demethylase KDM6B, serving as a scaffold protein. Upon induction by TGF-beta, ubiquitinates the TFIID component TAF7 for proteasomal degradation. Induces ferroptosis by ubiquitinating SLC7A11, a critical protein for lipid reactive oxygen species (ROS) scavenging. The chain is Tripartite motif-containing protein 26 (TRIM26) from Pan troglodytes (Chimpanzee).